The primary structure comprises 137 residues: Large ribosomal subunit protein uL16 (137 aa).

The protein belongs to the universal ribosomal protein uL16 family. Part of the 50S ribosomal subunit.

Its function is as follows. Binds 23S rRNA and is also seen to make contacts with the A and possibly P site tRNAs. The chain is Large ribosomal subunit protein uL16 from Wolbachia pipientis wMel.